A 695-amino-acid polypeptide reads, in one-letter code: Follicle-stimulating hormone receptor (695 aa).

The N-terminal stretch at 1 to 17 (MALLLVALLAFLSLGSG) is a signal peptide. Disulfide bonds link C18/C25 and C23/C32. Residues 18-46 (CHHRLCHCSNGVFLCQESKVTEIPSDLPR) form the LRRNT domain. Residues 18–366 (CHHRLCHCSN…EDIMGDDILR (349 aa)) lie on the Extracellular side of the membrane. 9 LRR repeats span residues 49-72 (VELR…FGDL), 73-97 (EKIE…LPKL), 98-118 (HEIR…AFQN), 119-143 (LPNL…KIQS), 144-169 (LQKV…MGLS), 170-192 (FESM…AFNG), 193-216 (TQLD…VFQG), 217-240 (ASGP…GLEN), and 241-259 (LKKL…PSLE). N191 and N199 each carry an N-linked (GlcNAc...) asparagine glycan. 4 disulfides stabilise this stretch: C275–C346, C276–C292, C276–C356, and C292–C338. N293 carries an N-linked (GlcNAc...) asparagine glycan. Y335 carries the post-translational modification Sulfotyrosine. Residues 367–387 (VLIWFISILAITGNILVLVIL) traverse the membrane as a helical segment. At 388-398 (ITSQYKLTVPR) the chain is on the cytoplasmic side. A helical transmembrane segment spans residues 399-421 (FLMCNLAFADLCIGIYLLLIASV). The Extracellular portion of the chain corresponds to 422–443 (DVHTKTEYHNYAIDWQTGAGCD). C442 and C517 are joined by a disulfide. Residues 444 to 465 (AAGFFTVFASELSVYTLTAITL) form a helical membrane-spanning segment. Topologically, residues 466-485 (ERWHTITHAMQLECKVQLRH) are cytoplasmic. A helical membrane pass occupies residues 486-508 (AASIMLVGWIFAFAVALFPIFGI). Residues 509–528 (SSYMKVSICLPMDIDSPLSQ) lie on the Extracellular side of the membrane. A helical membrane pass occupies residues 529–550 (LYVMSLLVLNVLAFVVICGCYT). The Cytoplasmic segment spans residues 551-573 (HIYLTVRNPNITSSSSDTKIAKR). The helical transmembrane segment at 574–597 (MAMLIFTDFLCMAPISFFAISASL) threads the bilayer. The Extracellular segment spans residues 598 to 608 (KVPLITVSKSK). A helical membrane pass occupies residues 609–630 (ILLVLFYPINSCANPFLYAIFT). Residues 631–695 (KNFRRDFFIL…LIPLRHLAKN (65 aa)) lie on the Cytoplasmic side of the membrane.

The protein belongs to the G-protein coupled receptor 1 family. FSH/LSH/TSH subfamily. Homotrimer. Functions as a homotrimer binding the FSH hormone heterodimer composed of CGA and FSHB. Interacts with ARRB2. Interacts with APPL2; interaction is independent of follicle stimulating hormone stimulation. In terms of processing, N-glycosylated; indirectly required for FSH-binding, possibly via a conformational change that allows high affinity binding of hormone. Sulfated.

The protein resides in the cell membrane. In terms of biological role, g protein-coupled receptor for follitropin, the follicle-stimulating hormone. Through cAMP production activates the downstream PI3K-AKT and ERK1/ERK2 signaling pathways. This Bos taurus (Bovine) protein is Follicle-stimulating hormone receptor (FSHR).